The following is a 212-amino-acid chain: Putative inactive 6-phospho-alpha-glucosidase (212 aa).

4–70 (FSVVVAGGGS…PDIAFSYTTD (67 aa)) provides a ligand contact to NAD(+). Residues Cys169 and His200 each contribute to the Mn(2+) site.

It belongs to the glycosyl hydrolase 4 family.

The protein is Putative inactive 6-phospho-alpha-glucosidase of Escherichia coli (strain K12).